A 352-amino-acid polypeptide reads, in one-letter code: V-type ATP synthase subunit C (352 aa).

Belongs to the V-ATPase V0D/AC39 subunit family.

Produces ATP from ADP in the presence of a proton gradient across the membrane. In Deinococcus radiodurans (strain ATCC 13939 / DSM 20539 / JCM 16871 / CCUG 27074 / LMG 4051 / NBRC 15346 / NCIMB 9279 / VKM B-1422 / R1), this protein is V-type ATP synthase subunit C (atpC).